The chain runs to 345 residues: Ferrochelatase (345 aa).

Fe cation is bound by residues H215 and E296.

It belongs to the ferrochelatase family.

It localises to the cytoplasm. It carries out the reaction heme b + 2 H(+) = protoporphyrin IX + Fe(2+). The protein operates within porphyrin-containing compound metabolism; protoheme biosynthesis; protoheme from protoporphyrin-IX: step 1/1. Catalyzes the ferrous insertion into protoporphyrin IX. The protein is Ferrochelatase of Rhodopseudomonas palustris (strain BisB5).